A 37-amino-acid chain; its full sequence is Potassium channel toxin alpha-KTx 1.13 (37 aa).

At Gln-1 the chain carries Pyrrolidone carboxylic acid. 3 disulfide bridges follow: Cys-7-Cys-28, Cys-13-Cys-33, and Cys-17-Cys-35. Residues 26–33 (GKCMNKKC) are interaction with Ca(2+)-activated K(+) channels.

Belongs to the short scorpion toxin superfamily. Potassium channel inhibitor family. Alpha-KTx 01 subfamily. In terms of tissue distribution, expressed by the venom gland.

The protein resides in the secreted. Functionally, potent selective inhibitor of high conductance (maxi-K), different medium and small conductance calcium-activated potassium channels (KCa1.1/KCNMA1 and others), as well as a voltage-dependent potassium channel (Kv1.3/KCNA3&gt;Kv1.2/KCNA2&gt;Kv1.6/KCNA3&gt;&gt;Shaker/Sh). It blocks channel activity by a simple bimolecular inhibition process. Its function is as follows. Has a pH-specific antimicrobial activity against bacteria (B.subtilis, E.coli and S.aureus) and the fungus C.albicans. The chain is Potassium channel toxin alpha-KTx 1.13 from Leiurus hebraeus (Hebrew deathstalker scorpion).